Reading from the N-terminus, the 468-residue chain is Sorting and assembly machinery component 50 homolog (468 aa).

Residues 1 to 24 (MGTVHARSLDPLPMNGPDFGSHDD) are disordered. Positions 44–124 (VVVQRVHFEG…LDVTFEVTEL (81 aa)) constitute a POTRA domain.

The protein belongs to the SAM50/omp85 family. In terms of assembly, associates with the mitochondrial contact site and cristae organizing system (MICOS) complex (also known as MINOS or MitOS complex).

The protein resides in the mitochondrion outer membrane. Its function is as follows. May play a role in the maintenance of the structure of mitochondrial cristae. The polypeptide is Sorting and assembly machinery component 50 homolog (samm50) (Xenopus tropicalis (Western clawed frog)).